Reading from the N-terminus, the 130-residue chain is Odontogenesis associated phosphoprotein (130 aa).

The first 23 residues, 1 to 23 (MARRHCFSYWLLVCWLVVTVAEG), serve as a signal peptide directing secretion.

As to expression, highly expressed in placenta.

The protein localises to the secreted. Functionally, may promote nucleation of hydroxyapatite. The polypeptide is Odontogenesis associated phosphoprotein (Homo sapiens (Human)).